Consider the following 512-residue polypeptide: 2'-5'-oligoadenylate synthase-like protein 1 (512 aa).

2 consecutive Ubiquitin-like domains span residues 351-430 (IQVT…ISPE) and 431-507 (IQVF…EGKA).

This sequence belongs to the 2-5A synthase family. Specifically interacts with the ligand binding domain of the thyroid receptor (TR). TRIP14 does not require the presence of thyroid hormone for its interaction. Binds MBD1.

Its subcellular location is the nucleus. It is found in the nucleolus. It localises to the cytoplasm. Functionally, does not have 2'-5'-OAS activity, but can bind double-stranded RNA. Displays antiviral activity via an alternative antiviral pathway independent of RNase L. This chain is 2'-5'-oligoadenylate synthase-like protein 1 (Oasl), found in Rattus norvegicus (Rat).